We begin with the raw amino-acid sequence, 176 residues long: Ribosome maturation factor RimM (176 aa).

The 74-residue stretch at 100–173 (EGEFHLLDLV…WLRLTPPPGL (74 aa)) folds into the PRC barrel domain.

This sequence belongs to the RimM family. As to quaternary structure, binds ribosomal protein uS19.

Its subcellular location is the cytoplasm. An accessory protein needed during the final step in the assembly of 30S ribosomal subunit, possibly for assembly of the head region. Essential for efficient processing of 16S rRNA. May be needed both before and after RbfA during the maturation of 16S rRNA. It has affinity for free ribosomal 30S subunits but not for 70S ribosomes. The protein is Ribosome maturation factor RimM of Prochlorococcus marinus (strain MIT 9313).